A 154-amino-acid chain; its full sequence is Lipoprotein signal peptidase (154 aa).

The next 4 helical transmembrane spans lie at 8 to 28 (AFFLISVACFLADYYSKYWAL), 36 to 56 (IVVNTYMNFILAFNHGAAFSF), 66 to 86 (WLFAGFAGIVALWLIMTLLTK), and 88 to 108 (HHWLMSVSYACILGGAVGNLY). Residues Asp-118 and Asp-136 contribute to the active site. The helical transmembrane segment at 129–149 (WPVFNLADVAITLGVILMLIA) threads the bilayer.

This sequence belongs to the peptidase A8 family.

The protein resides in the cell inner membrane. It catalyses the reaction Release of signal peptides from bacterial membrane prolipoproteins. Hydrolyzes -Xaa-Yaa-Zaa-|-(S,diacylglyceryl)Cys-, in which Xaa is hydrophobic (preferably Leu), and Yaa (Ala or Ser) and Zaa (Gly or Ala) have small, neutral side chains.. It functions in the pathway protein modification; lipoprotein biosynthesis (signal peptide cleavage). This protein specifically catalyzes the removal of signal peptides from prolipoproteins. The chain is Lipoprotein signal peptidase from Dichelobacter nodosus (strain VCS1703A).